The following is a 184-amino-acid chain: ATP synthase subunit b, chloroplastic (184 aa).

Residues 27-49 (LATNPINLSVVLGVLVFFGKGVL) traverse the membrane as a helical segment.

This sequence belongs to the ATPase B chain family. As to quaternary structure, F-type ATPases have 2 components, F(1) - the catalytic core - and F(0) - the membrane proton channel. F(1) has five subunits: alpha(3), beta(3), gamma(1), delta(1), epsilon(1). F(0) has four main subunits: a(1), b(1), b'(1) and c(10-14). The alpha and beta chains form an alternating ring which encloses part of the gamma chain. F(1) is attached to F(0) by a central stalk formed by the gamma and epsilon chains, while a peripheral stalk is formed by the delta, b and b' chains.

Its subcellular location is the plastid. The protein resides in the chloroplast thylakoid membrane. In terms of biological role, f(1)F(0) ATP synthase produces ATP from ADP in the presence of a proton or sodium gradient. F-type ATPases consist of two structural domains, F(1) containing the extramembraneous catalytic core and F(0) containing the membrane proton channel, linked together by a central stalk and a peripheral stalk. During catalysis, ATP synthesis in the catalytic domain of F(1) is coupled via a rotary mechanism of the central stalk subunits to proton translocation. Its function is as follows. Component of the F(0) channel, it forms part of the peripheral stalk, linking F(1) to F(0). The protein is ATP synthase subunit b, chloroplastic of Phaseolus vulgaris (Kidney bean).